Here is a 201-residue protein sequence, read N- to C-terminus: MNISGLIIGLGNPGREYDRTRHNFGFMFIDALLEEAQRNPFARCEQLSGGKKKYDLWRCDIVEGQAPWLLAKPQTFMNLSGEAVLAIASFYRVKPAAMVVAHDELDLPLGRMRFKMGGGNAGHNGLKSITQCLGTPDFHRLRLGIGKPPAGGETTGWVLGRFSQSDTAMVDAVLEAAIQGIRTFATEGDVAATQYINAFRP.

Tyr-17 provides a ligand contact to tRNA. His-22 serves as the catalytic Proton acceptor. TRNA contacts are provided by Phe-76, Asn-78, and Asn-124.

Belongs to the PTH family. Monomer.

The protein localises to the cytoplasm. It catalyses the reaction an N-acyl-L-alpha-aminoacyl-tRNA + H2O = an N-acyl-L-amino acid + a tRNA + H(+). Functionally, hydrolyzes ribosome-free peptidyl-tRNAs (with 1 or more amino acids incorporated), which drop off the ribosome during protein synthesis, or as a result of ribosome stalling. In terms of biological role, catalyzes the release of premature peptidyl moieties from peptidyl-tRNA molecules trapped in stalled 50S ribosomal subunits, and thus maintains levels of free tRNAs and 50S ribosomes. This is Peptidyl-tRNA hydrolase from Nitratidesulfovibrio vulgaris (strain ATCC 29579 / DSM 644 / CCUG 34227 / NCIMB 8303 / VKM B-1760 / Hildenborough) (Desulfovibrio vulgaris).